The following is a 145-amino-acid chain: D-aminoacyl-tRNA deacylase (145 aa).

Residues 137-138 (GP) carry the Gly-cisPro motif, important for rejection of L-amino acids motif.

The protein belongs to the DTD family. As to quaternary structure, homodimer.

The protein localises to the cytoplasm. The catalysed reaction is glycyl-tRNA(Ala) + H2O = tRNA(Ala) + glycine + H(+). It carries out the reaction a D-aminoacyl-tRNA + H2O = a tRNA + a D-alpha-amino acid + H(+). Functionally, an aminoacyl-tRNA editing enzyme that deacylates mischarged D-aminoacyl-tRNAs. Also deacylates mischarged glycyl-tRNA(Ala), protecting cells against glycine mischarging by AlaRS. Acts via tRNA-based rather than protein-based catalysis; rejects L-amino acids rather than detecting D-amino acids in the active site. By recycling D-aminoacyl-tRNA to D-amino acids and free tRNA molecules, this enzyme counteracts the toxicity associated with the formation of D-aminoacyl-tRNA entities in vivo and helps enforce protein L-homochirality. The polypeptide is D-aminoacyl-tRNA deacylase (Shewanella sediminis (strain HAW-EB3)).